A 467-amino-acid polypeptide reads, in one-letter code: MPLDAAPVDPASRGPVSAFEPPSSHGADDDDDHRTNASKELFGLKRRVVITGVGVRAPGGNGTRQFWELLTSGRTATRRISFFDPSPYRSQVAAEADFDPVAEGFGPRELDRMDRASQFAVACAREAFAASGLDPDTLDPARVGVSLGSAVAAATSLEREYLLLSDSGRDWEVDAAWLSRHMFDYLVPSVMPAEVAWAVGAEGPVTMVSTGCTSGLDSVGNAVRAIEEGSADVMFAGAADTPITPIVVACFDAIRATTARNDDPEHASRPFDGTRDGFVLAEGAAMFVLEDYDSALARGARIHAEISGYATRCNAYHMTGLKADGREMAETIRVALDESRTDATDIDYINAHGSGTRQNDRHETAAYKRALGEHARRTPVSSIKSMVGHSLGAIGSLEIAACVLALEHGVVPPTANLRTSDPECDLDYVPLEARERKLRSVLTVGSGFGGFQSAMVLRDAETAGAAA.

The segment at 1–35 is disordered; the sequence is MPLDAAPVDPASRGPVSAFEPPSSHGADDDDDHRT. Positions 45–459 constitute a Ketosynthase family 3 (KS3) domain; sequence KRRVVITGVG…GFQSAMVLRD (415 aa). Residues Cys-212, His-352, and His-389 each act as for beta-ketoacyl synthase activity in the active site.

Belongs to the thiolase-like superfamily. Beta-ketoacyl-ACP synthases family.

It functions in the pathway antibiotic biosynthesis; actinorhodin biosynthesis. The sequence is that of Actinorhodin polyketide putative beta-ketoacyl synthase 1 from Streptomyces coelicolor (strain ATCC BAA-471 / A3(2) / M145).